A 326-amino-acid polypeptide reads, in one-letter code: tRNA-modifying protein YgfZ (326 aa).

The folate site is built by tryptophan 27 and tryptophan 189.

The protein belongs to the tRNA-modifying YgfZ family.

Its subcellular location is the cytoplasm. Its function is as follows. Folate-binding protein involved in regulating the level of ATP-DnaA and in the modification of some tRNAs. It is probably a key factor in regulatory networks that act via tRNA modification, such as initiation of chromosomal replication. This Salmonella schwarzengrund (strain CVM19633) protein is tRNA-modifying protein YgfZ.